The chain runs to 406 residues: GTPase Obg (406 aa).

The Obg domain maps to 1-159; sequence MKFVDEVSIH…RDLKLELKVL (159 aa). Residues 127–148 are disordered; sequence NTRFKSSTNRAPRQTTPGKPGE. Over residues 129 to 143 the composition is skewed to polar residues; that stretch reads RFKSSTNRAPRQTTP. The region spanning 160–334 is the OBG-type G domain; the sequence is ADVGLLGLPN…LSQDIMRYLD (175 aa). Residues 166–173, 191–195, 213–216, 283–286, and 315–317 each bind GTP; these read GLPNAGKS, FTTLV, DIPG, NKMD, and SAL. The Mg(2+) site is built by serine 173 and threonine 193. The interval 382-406 is disordered; it reads AGAVDDDDFDDEEDDGDGPEIFYVP. Residues 385 to 399 show a composition bias toward acidic residues; the sequence is VDDDDFDDEEDDGDG.

The protein belongs to the TRAFAC class OBG-HflX-like GTPase superfamily. OBG GTPase family. As to quaternary structure, monomer. Mg(2+) serves as cofactor.

The protein localises to the cytoplasm. Functionally, an essential GTPase which binds GTP, GDP and possibly (p)ppGpp with moderate affinity, with high nucleotide exchange rates and a fairly low GTP hydrolysis rate. Plays a role in control of the cell cycle, stress response, ribosome biogenesis and in those bacteria that undergo differentiation, in morphogenesis control. The chain is GTPase Obg from Pseudomonas aeruginosa (strain LESB58).